The chain runs to 181 residues: ATP-dependent protease subunit HslV (181 aa).

Thr-8 is an active-site residue. Gly-165, Cys-168, and Thr-171 together coordinate Na(+).

Belongs to the peptidase T1B family. HslV subfamily. A double ring-shaped homohexamer of HslV is capped on each side by a ring-shaped HslU homohexamer. The assembly of the HslU/HslV complex is dependent on binding of ATP.

The protein localises to the cytoplasm. The enzyme catalyses ATP-dependent cleavage of peptide bonds with broad specificity.. With respect to regulation, allosterically activated by HslU binding. Functionally, protease subunit of a proteasome-like degradation complex believed to be a general protein degrading machinery. The chain is ATP-dependent protease subunit HslV from Oceanobacillus iheyensis (strain DSM 14371 / CIP 107618 / JCM 11309 / KCTC 3954 / HTE831).